We begin with the raw amino-acid sequence, 327 residues long: Peroxidase 21 (327 aa).

A signal peptide spans 1–28; it reads MANAKPFCLLGFFCLLLQLFSIFHIGNG. 4 cysteine pairs are disulfide-bonded: Cys39-Cys118, Cys72-Cys77, Cys124-Cys323, and Cys204-Cys231. Catalysis depends on His70, which acts as the Proton acceptor. 4 residues coordinate Ca(2+): Asp71, Val74, Asp78, and Ser80. Pro167 lines the substrate pocket. An N-linked (GlcNAc...) asparagine glycan is attached at Asn170. Residue His197 participates in heme b binding. A Ca(2+)-binding site is contributed by Ser198. Ca(2+) contacts are provided by Asp247, Thr250, and Asp255.

It belongs to the peroxidase family. Classical plant (class III) peroxidase subfamily. Requires heme b as cofactor. The cofactor is Ca(2+). Preferentially expressed in roots and leaves, slightly in stems.

It catalyses the reaction 2 a phenolic donor + H2O2 = 2 a phenolic radical donor + 2 H2O. Functionally, removal of H(2)O(2), oxidation of toxic reductants, biosynthesis and degradation of lignin, suberization, auxin catabolism, response to environmental stresses such as wounding, pathogen attack and oxidative stress. These functions might be dependent on each isozyme/isoform in each plant tissue. Might function as heat shock-like defense protein. May be implicated in the systemic acquired resistance response. The chain is Peroxidase 21 (PER21) from Arabidopsis thaliana (Mouse-ear cress).